We begin with the raw amino-acid sequence, 546 residues long: Glucose-6-phosphate isomerase (546 aa).

The active-site Proton donor is the glutamate 357. Catalysis depends on residues histidine 389 and lysine 509.

The protein belongs to the GPI family.

Its subcellular location is the cytoplasm. It carries out the reaction alpha-D-glucose 6-phosphate = beta-D-fructose 6-phosphate. It participates in carbohydrate biosynthesis; gluconeogenesis. It functions in the pathway carbohydrate degradation; glycolysis; D-glyceraldehyde 3-phosphate and glycerone phosphate from D-glucose: step 2/4. Its function is as follows. Catalyzes the reversible isomerization of glucose-6-phosphate to fructose-6-phosphate. The chain is Glucose-6-phosphate isomerase from Anaeromyxobacter dehalogenans (strain 2CP-1 / ATCC BAA-258).